The sequence spans 89 residues: Antimicrobial peptide Ar-AMP (89 aa).

An N-terminal signal peptide occupies residues 1–25; sequence MVNMKSVALIVIVMMAFMMVDPSMG. The region spanning 26–68 is the Chitin-binding type-1 domain; sequence AGECVQGRCPSGMCCSQFGYCGRGPKYCGRASTTVDHQADAAA. Cystine bridges form between C29–C40, C34–C46, and C39–C53. Residues 56-89 constitute a propeptide, removed in mature form; that stretch reads ASTTVDHQADAAAAAATKTANNPTDAKLAGAGSP.

In terms of biological role, chitin-binding protein that inhibits the growth of the fungal pathogens B.cinerea, F.culmorum, H.sativum and A.consortiale, but not that of R.solani. Induces morphological changes in the fungal pathogens F.culmorum, H.sativum and R.solani, but not in A.consortiale and B.cinerea. Has antibacterial activity against the Gram-positive bacterium B.subtilis, but lacks antibacterial activity against the Gram-negative bacterium E.coli. This is Antimicrobial peptide Ar-AMP from Amaranthus retroflexus (Redroot amaranth).